The sequence spans 270 residues: Coiled-coil domain-containing protein 3 (270 aa).

Residues 1-21 (MLRQLLLAALCLAGPPAPARA) form the signal peptide. N-linked (GlcNAc...) asparagine glycosylation is present at Asn-100. A coiled-coil region spans residues 188-251 (SVQKALFEEE…NQKLSEKLAA (64 aa)).

Homodimer. In terms of tissue distribution, expressed in umbilical vein endothelial cells (HUVEC), and at lower levels in aortic smooth muscle cells (HASMC).

Its subcellular location is the secreted. Its function is as follows. Negatively regulates TNF-alpha-induced pro-inflammatory response in endothelial cells (ECs) via inhibition of TNF-alpha-induced NF-kappaB activation in ECs. Positively regulates lipid accumulation in adipose cells. This Homo sapiens (Human) protein is Coiled-coil domain-containing protein 3 (CCDC3).